The following is a 256-amino-acid chain: MLEFYGKRFESRLLLGTAQYPSPSILADAVRASLSRIVTVSLRRESGEARAGQDFWALIKALGVAVLPNTAGCHTPREAITTAHMAREVFGTNWIKLEVIGDTDTLQPDPFGLVEAARILCDEGFEVFPYMNDDLIVAERLIEAGCKVLMPWGAPIGSGRGLNNPYALKTMRAHFPDIPLVVDAGIGVPSHAAAAMELGFDAVLINTAVAKAGDPAAMARAFALAVEAGRLAYEADPIEARDMASPSTPLLGKAFL.

Lysine 96 functions as the Schiff-base intermediate with DXP in the catalytic mechanism. Residues glycine 157, 184-185, and 206-207 each bind 1-deoxy-D-xylulose 5-phosphate; these read AG and NT.

It belongs to the ThiG family. Homotetramer. Forms heterodimers with either ThiH or ThiS.

The protein resides in the cytoplasm. The catalysed reaction is [ThiS sulfur-carrier protein]-C-terminal-Gly-aminoethanethioate + 2-iminoacetate + 1-deoxy-D-xylulose 5-phosphate = [ThiS sulfur-carrier protein]-C-terminal Gly-Gly + 2-[(2R,5Z)-2-carboxy-4-methylthiazol-5(2H)-ylidene]ethyl phosphate + 2 H2O + H(+). It functions in the pathway cofactor biosynthesis; thiamine diphosphate biosynthesis. Its function is as follows. Catalyzes the rearrangement of 1-deoxy-D-xylulose 5-phosphate (DXP) to produce the thiazole phosphate moiety of thiamine. Sulfur is provided by the thiocarboxylate moiety of the carrier protein ThiS. In vitro, sulfur can be provided by H(2)S. This Brucella abortus (strain S19) protein is Thiazole synthase.